Consider the following 456-residue polypeptide: uncharacterized protein (456 aa).

Basic and acidic residues-rich tracts occupy residues 181 to 210 (DQRKESIVNDERKKNPEFREKPDKNEDKKV) and 217 to 231 (KEIENKGIDHEENEE). Positions 181–231 (DQRKESIVNDERKKNPEFREKPDKNEDKKVKPPPSLKEIENKGIDHEENEE) are disordered. Positions 216-248 (LKEIENKGIDHEENEEDKKRELMFKLQLLQKQY) form a coiled coil. The helical transmembrane segment at 347–365 (LALAILFNAVWFIAAKMIM) threads the bilayer. Residues 383 to 407 (NKSGTTPNSVSPRTWGNSKSPQSEF) are compositionally biased toward polar residues. The disordered stretch occupies residues 383–456 (NKSGTTPNSV…MREQGIETLK (74 aa)). The span at 441 to 456 (DESRREMREQGIETLK) shows a compositional bias: basic and acidic residues.

It belongs to the IIV-6 067R family.

The protein localises to the membrane. This is an uncharacterized protein from Invertebrate iridescent virus 6 (IIV-6).